Reading from the N-terminus, the 162-residue chain is MKLRILSVGSKMPKWIDTGFNEYHKRIQPMLTTEMVDLAAAKRAKNPSEANLAQYREQEGKAILATHQSNSREKLWVLDVKGKMLSTEQLADKLSEAMQVGDDVALVIGGADGVSPEVLAAADFKWSLSPLTLPHPLVRVVLMEQLYRAMSINNNHPYHRGN.

S-adenosyl-L-methionine contacts are provided by residues Leu78, Gly109, and 128-133 (LSPLTL).

This sequence belongs to the RNA methyltransferase RlmH family. In terms of assembly, homodimer.

It localises to the cytoplasm. The catalysed reaction is pseudouridine(1915) in 23S rRNA + S-adenosyl-L-methionine = N(3)-methylpseudouridine(1915) in 23S rRNA + S-adenosyl-L-homocysteine + H(+). Its function is as follows. Specifically methylates the pseudouridine at position 1915 (m3Psi1915) in 23S rRNA. The sequence is that of Ribosomal RNA large subunit methyltransferase H from Psychrobacter sp. (strain PRwf-1).